Consider the following 164-residue polypeptide: ATP synthase subunit b (164 aa).

A helical membrane pass occupies residues 7 to 25; that stretch reads SFWLAVSFIIFVYLIYRPA.

The protein belongs to the ATPase B chain family. In terms of assembly, F-type ATPases have 2 components, F(1) - the catalytic core - and F(0) - the membrane proton channel. F(1) has five subunits: alpha(3), beta(3), gamma(1), delta(1), epsilon(1). F(0) has three main subunits: a(1), b(2) and c(10-14). The alpha and beta chains form an alternating ring which encloses part of the gamma chain. F(1) is attached to F(0) by a central stalk formed by the gamma and epsilon chains, while a peripheral stalk is formed by the delta and b chains.

Its subcellular location is the cell inner membrane. Functionally, f(1)F(0) ATP synthase produces ATP from ADP in the presence of a proton or sodium gradient. F-type ATPases consist of two structural domains, F(1) containing the extramembraneous catalytic core and F(0) containing the membrane proton channel, linked together by a central stalk and a peripheral stalk. During catalysis, ATP synthesis in the catalytic domain of F(1) is coupled via a rotary mechanism of the central stalk subunits to proton translocation. In terms of biological role, component of the F(0) channel, it forms part of the peripheral stalk, linking F(1) to F(0). In Rickettsia felis (strain ATCC VR-1525 / URRWXCal2) (Rickettsia azadi), this protein is ATP synthase subunit b.